The chain runs to 446 residues: C-type lectin domain family 18 member A (446 aa).

The signal sequence occupies residues 1–26 (MLHPETSPGRGHLLAVLLALLGTAWA). The 131-residue stretch at 52–182 (LSLHNRLRSW…AAIEAFVCAY (131 aa)) folds into the SCP domain. The N-linked (GlcNAc...) asparagine glycan is linked to N144. Residues 228-261 (PRNPCRMSCQNHGRLNISTCHCHCPPGYTGRYCQ) enclose the EGF-like domain. 4 cysteine pairs are disulfide-bonded: C236-C249, C251-C260, C327-C432, and C408-C424. In terms of domain architecture, C-type lectin spans 306-433 (IDGDCFMVSS…CKTRNRYICQ (128 aa)).

Post-translationally, N-glycosylated. Dectected in all cell lines tested and in peripheral blood cells.

Its subcellular location is the secreted. The protein resides in the endoplasmic reticulum. The protein localises to the golgi apparatus. It localises to the endosome. Its function is as follows. Binds polysaccharides in a Ca(2+)-independent manner with a preferentially binding to fucoidan, beta-glucans and galactans. This is C-type lectin domain family 18 member A (CLEC18A) from Homo sapiens (Human).